Consider the following 253-residue polypeptide: Probable transcriptional regulatory protein Tpet_0454 (253 aa).

It belongs to the TACO1 family.

The protein resides in the cytoplasm. The sequence is that of Probable transcriptional regulatory protein Tpet_0454 from Thermotoga petrophila (strain ATCC BAA-488 / DSM 13995 / JCM 10881 / RKU-1).